Here is a 243-residue protein sequence, read N- to C-terminus: Pyridoxine 5'-phosphate synthase (243 aa).

Residue asparagine 9 coordinates 3-amino-2-oxopropyl phosphate. Residue 11 to 12 coordinates 1-deoxy-D-xylulose 5-phosphate; that stretch reads DH. Arginine 20 contacts 3-amino-2-oxopropyl phosphate. Histidine 45 (proton acceptor) is an active-site residue. Residues arginine 47 and histidine 52 each coordinate 1-deoxy-D-xylulose 5-phosphate. Glutamate 72 functions as the Proton acceptor in the catalytic mechanism. Threonine 102 contacts 1-deoxy-D-xylulose 5-phosphate. The Proton donor role is filled by histidine 193. 3-amino-2-oxopropyl phosphate is bound by residues glycine 194 and 215–216; that span reads GH.

The protein belongs to the PNP synthase family. Homooctamer; tetramer of dimers.

The protein resides in the cytoplasm. The enzyme catalyses 3-amino-2-oxopropyl phosphate + 1-deoxy-D-xylulose 5-phosphate = pyridoxine 5'-phosphate + phosphate + 2 H2O + H(+). It functions in the pathway cofactor biosynthesis; pyridoxine 5'-phosphate biosynthesis; pyridoxine 5'-phosphate from D-erythrose 4-phosphate: step 5/5. In terms of biological role, catalyzes the complicated ring closure reaction between the two acyclic compounds 1-deoxy-D-xylulose-5-phosphate (DXP) and 3-amino-2-oxopropyl phosphate (1-amino-acetone-3-phosphate or AAP) to form pyridoxine 5'-phosphate (PNP) and inorganic phosphate. The polypeptide is Pyridoxine 5'-phosphate synthase (Salmonella typhimurium (strain LT2 / SGSC1412 / ATCC 700720)).